Reading from the N-terminus, the 508-residue chain is Anthranilate synthase component 1 (508 aa).

Residues Ser49 and 282–284 contribute to the L-tryptophan site; that span reads PYM. 317-318 provides a ligand contact to chorismate; that stretch reads GT. Glu344 contributes to the Mg(2+) binding site. Chorismate is bound by residues Tyr432, Arg452, 466-468, and Gly468; that span reads GAG. Glu481 provides a ligand contact to Mg(2+).

The protein belongs to the anthranilate synthase component I family. Heterotetramer consisting of two non-identical subunits: a beta subunit (TrpG) and a large alpha subunit (TrpE). Mg(2+) serves as cofactor.

It catalyses the reaction chorismate + L-glutamine = anthranilate + pyruvate + L-glutamate + H(+). It functions in the pathway amino-acid biosynthesis; L-tryptophan biosynthesis; L-tryptophan from chorismate: step 1/5. With respect to regulation, feedback inhibited by tryptophan. Part of a heterotetrameric complex that catalyzes the two-step biosynthesis of anthranilate, an intermediate in the biosynthesis of L-tryptophan. In the first step, the glutamine-binding beta subunit (TrpG) of anthranilate synthase (AS) provides the glutamine amidotransferase activity which generates ammonia as a substrate that, along with chorismate, is used in the second step, catalyzed by the large alpha subunit of AS (TrpE) to produce anthranilate. In the absence of TrpG, TrpE can synthesize anthranilate directly from chorismate and high concentrations of ammonia. This is Anthranilate synthase component 1 (trpE) from Bacillus caldotenax.